The following is a 437-amino-acid chain: uncharacterized protein (437 aa).

Phosphoserine is present on residues Ser290 and Ser293. The residue at position 296 (Thr296) is a Phosphothreonine. Residues Ser418 and Ser428 each carry the phosphoserine modification.

This is an uncharacterized protein from Schizosaccharomyces pombe (strain 972 / ATCC 24843) (Fission yeast).